A 440-amino-acid polypeptide reads, in one-letter code: Transposon Ty1-LR2 Gag polyprotein (440 aa).

Polar residues-rich tracts occupy residues 1 to 23, 48 to 60, and 127 to 152; these read MESQ…SVTS, TKAN…TPAS, and QSQF…GNTF. Disordered regions lie at residues 1 to 93, 126 to 174, and 352 to 440; these read MESQ…MMTQ, PQSQ…PPPM, and GSRN…PGTY. A compositionally biased stretch (low complexity) spans 153–165; it reads TDSSSADSDMTST. Positions 299–401 are RNA-binding; the sequence is NNGIHINNKV…NSKSKTARAH (103 aa). Over residues 402–418 the composition is skewed to low complexity; sequence NVSTSNNSPSTDNDSIS. Residue serine 416 is modified to Phosphoserine. A compositionally biased stretch (polar residues) spans 419 to 428; sequence KSTTEPIQLN. Basic and acidic residues predominate over residues 429–440; that stretch reads NKHDLHLRPGTY.

In terms of assembly, homotrimer.

It localises to the cytoplasm. Capsid protein (CA) is the structural component of the virus-like particle (VLP), forming the shell that encapsulates the retrotransposons dimeric RNA genome. The particles are assembled from trimer-clustered units and there are holes in the capsid shells that allow for the diffusion of macromolecules. CA also has nucleocapsid-like chaperone activity, promoting primer tRNA(i)-Met annealing to the multipartite primer-binding site (PBS), dimerization of Ty1 RNA and initiation of reverse transcription. The chain is Transposon Ty1-LR2 Gag polyprotein (TY1A-LR2) from Saccharomyces cerevisiae (strain ATCC 204508 / S288c) (Baker's yeast).